The following is a 152-amino-acid chain: Small ribosomal subunit protein uS8m (152 aa).

The protein belongs to the universal ribosomal protein uS8 family.

The protein localises to the mitochondrion. In Marchantia polymorpha (Common liverwort), this protein is Small ribosomal subunit protein uS8m (RPS8).